The following is a 394-amino-acid chain: Endothelial cell-selective adhesion molecule (394 aa).

Positions 1 to 29 are cleaved as a signal peptide; it reads MILQAGTPETSLLRVLFLGLSTLAAFSRA. The Extracellular portion of the chain corresponds to 30–251; sequence QMELHVPPGL…LDVMTGSKAA (222 aa). The Ig-like V-type domain occupies 37-146; it reads PGLNKLEAVE…EGKSIGHSIK (110 aa). Residues Asn-111, Asn-172, Asn-216, and Asn-239 are each glycosylated (N-linked (GlcNAc...) asparagine). An Ig-like C2-type domain is found at 159–243; that stretch reads PSCSLQGVPY…GFAKCNVTLD (85 aa). The cysteines at positions 177 and 227 are disulfide-linked. The helical transmembrane segment at 252–272 threads the bilayer; that stretch reads VVAGAVVGTFVGLVLIAGLVL. Topologically, residues 273-394 are cytoplasmic; it reads LYQRRSKTLE…PAQSQAGSLV (122 aa). The residue at position 304 (Ser-304) is a Phosphoserine. 2 stretches are compositionally biased toward polar residues: residues 304-318 and 335-347; these read SDTI…SVTS and FTPT…QALS. The tract at residues 304-372 is disordered; it reads SDTISKNGTL…SLTPGGVSSS (69 aa). 2 positions are modified to phosphothreonine: Thr-336 and Thr-338. Residues Ser-340, Ser-343, Ser-348, and Ser-375 each carry the phosphoserine modification.

As to quaternary structure, interacts with MAGI1. As to expression, highly expressed in the heart and lung. Weakly expressed in the kidney and skin. Expression is restricted to the vascular endothelial cells. Expressed in the kidney, heart and tongue (at protein level). Also expressed on megakaryocytes and activated platelets.

Its subcellular location is the cell junction. It localises to the adherens junction. The protein localises to the tight junction. It is found in the cell membrane. Its function is as follows. Can mediate aggregation most likely through a homophilic molecular interaction. The polypeptide is Endothelial cell-selective adhesion molecule (Esam) (Mus musculus (Mouse)).